Here is a 97-residue protein sequence, read N- to C-terminus: Co-chaperonin GroES (97 aa).

It belongs to the GroES chaperonin family. In terms of assembly, heptamer of 7 subunits arranged in a ring. Interacts with the chaperonin GroEL.

It is found in the cytoplasm. Functionally, together with the chaperonin GroEL, plays an essential role in assisting protein folding. The GroEL-GroES system forms a nano-cage that allows encapsulation of the non-native substrate proteins and provides a physical environment optimized to promote and accelerate protein folding. GroES binds to the apical surface of the GroEL ring, thereby capping the opening of the GroEL channel. This chain is Co-chaperonin GroES, found in Buchnera aphidicola subsp. Geoica urticularia.